A 198-amino-acid polypeptide reads, in one-letter code: Na(+)-translocating NADH-quinone reductase subunit E (198 aa).

Helical transmembrane passes span 11–31 (AVFVENMALAFFLGMCTFLAV), 35–55 (VSTASGLGVAVTVVLGLAVPI), 77–97 (FLNFITFIGVIAALVQILEMI), 110–130 (GIFLPLIAVNCAIFGGVSFMV), 140–160 (IVYGFGSGIGWMLAIVAMAGI), and 176–196 (LGITFITTGLMALGFMSFSGV).

It belongs to the NqrDE/RnfAE family. As to quaternary structure, composed of six subunits; NqrA, NqrB, NqrC, NqrD, NqrE and NqrF.

It localises to the cell inner membrane. The enzyme catalyses a ubiquinone + n Na(+)(in) + NADH + H(+) = a ubiquinol + n Na(+)(out) + NAD(+). Its function is as follows. NQR complex catalyzes the reduction of ubiquinone-1 to ubiquinol by two successive reactions, coupled with the transport of Na(+) ions from the cytoplasm to the periplasm. NqrA to NqrE are probably involved in the second step, the conversion of ubisemiquinone to ubiquinol. This chain is Na(+)-translocating NADH-quinone reductase subunit E, found in Klebsiella pneumoniae subsp. pneumoniae (strain ATCC 700721 / MGH 78578).